Consider the following 346-residue polypeptide: Inositol 2-dehydrogenase/D-chiro-inositol 3-dehydrogenase (346 aa).

This sequence belongs to the Gfo/Idh/MocA family. In terms of assembly, homotetramer.

It carries out the reaction myo-inositol + NAD(+) = scyllo-inosose + NADH + H(+). It catalyses the reaction 1D-chiro-inositol + NAD(+) = scyllo-inosine + NADH + H(+). The protein operates within polyol metabolism; myo-inositol degradation into acetyl-CoA; acetyl-CoA from myo-inositol: step 1/7. In terms of biological role, involved in the oxidation of myo-inositol (MI) and D-chiro-inositol (DCI) to 2-keto-myo-inositol (2KMI or 2-inosose) and 1-keto-D-chiro-inositol (1KDCI), respectively. The sequence is that of Inositol 2-dehydrogenase/D-chiro-inositol 3-dehydrogenase from Lacticaseibacillus casei (Lactobacillus casei).